The primary structure comprises 51 residues: Large ribosomal subunit protein eL39 (51 aa).

Belongs to the eukaryotic ribosomal protein eL39 family.

This chain is Large ribosomal subunit protein eL39, found in Hyperthermus butylicus (strain DSM 5456 / JCM 9403 / PLM1-5).